The following is a 133-amino-acid chain: MRCRVYYEDTDSEGVVYHANYLKYCERARSEFFFKQNVLPENEEGVFVIRSIKADFFTPASLGQVLEIRTQIKELRKVFVVLFQEIYCIQNASLEPMKPFKVFASEIKFGFVNRSTYSPIAIPKLFKELLSAV.

The active site involves Asp-11.

The protein belongs to the 4-hydroxybenzoyl-CoA thioesterase family. As to quaternary structure, homotetramer. May interact with CagA.

Functionally, thioesterase that may be involved in phospholipid metabolism. Displays acyl-CoA thioesterase activity with lauroyl-CoA (C12:0), myristoyl-CoA (C14:0), palmitoyl-CoA (C16:0), stearoyl-CoA (C18:0) and benzoyl-CoA, catalyzing the hydrolysis of the thioester bond. Has low activity with butyryl-CoA and octanoyl-CoA. In Helicobacter pylori (strain J99 / ATCC 700824) (Campylobacter pylori J99), this protein is Acyl-CoA thioesterase YbgC (ybgC).